A 257-amino-acid chain; its full sequence is Alkaline phosphatase synthesis transcriptional regulatory protein SphR (257 aa).

Residues 25–148 (RILVVEDEAV…ELVARCRALL (124 aa)) enclose the Response regulatory domain. Aspartate 83 carries the 4-aspartylphosphate modification. The ompR/PhoB-type DNA-binding region spans 159–257 (PAVLRYEGLK…TVRGFGYRLG (99 aa)).

In terms of processing, phosphorylated by SphS.

Functionally, member of the two-component regulatory system SphR/SphS. Response regulator. Involved in inducible production of alkaline phosphatase in response to phosphate limitation as it is directly involved in the regulation of phoA transcription in response to phosphate limitation. Binds to two distinct sites upstream from the phoA promoter. The chain is Alkaline phosphatase synthesis transcriptional regulatory protein SphR (sphR) from Synechococcus elongatus (strain ATCC 33912 / PCC 7942 / FACHB-805) (Anacystis nidulans R2).